Consider the following 128-residue polypeptide: Small ribosomal subunit protein uS11 (128 aa).

The protein belongs to the universal ribosomal protein uS11 family. In terms of assembly, part of the 30S ribosomal subunit. Interacts with proteins S7 and S18. Binds to IF-3.

Located on the platform of the 30S subunit, it bridges several disparate RNA helices of the 16S rRNA. Forms part of the Shine-Dalgarno cleft in the 70S ribosome. The protein is Small ribosomal subunit protein uS11 of Porphyromonas gingivalis (strain ATCC BAA-308 / W83).